We begin with the raw amino-acid sequence, 131 residues long: MGRHKATIEGLVMKERYYSHRAPGTERWITQPVCKVTRTEPIFEGYIDIEPIEIGGKVYIPGLNEYVIVTDRQRNIHNEWTYQTDRVIKTIIDEKSLKECEEHNNKKAKNNDTQNQRQIKTSWWQRLTKKD.

The tract at residues 102 to 131 (EHNNKKAKNNDTQNQRQIKTSWWQRLTKKD) is disordered. Residues 111 to 125 (NDTQNQRQIKTSWWQ) show a composition bias toward polar residues.

The sequence is that of SPbeta prophage-derived uncharacterized protein YosD (yosD) from Bacillus subtilis (strain 168).